The sequence spans 2149 residues: Oxygen-regulated protein 1 (2149 aa).

Residues 1–20 are compositionally biased toward polar residues; sequence MSDTPSTGFSMIHPTSSEGQ. The tract at residues 1-25 is disordered; sequence MSDTPSTGFSMIHPTSSEGQVPSPR. In terms of domain architecture, Doublecortin 1 spans 36 to 118; it reads KRISFYKSGD…GRKVQPVDLD (83 aa). The interval 127–148 is disordered; sequence WLSSRAVSTHAPPHSVAAPGMP. The Doublecortin 2 domain maps to 152–231; sequence RSLVVFRNGD…REPFKPGNYD (80 aa). 3 disordered regions span residues 351-373, 1435-1456, and 1583-1613; these read VSKTGPSNNDEKSEMSFPGRTES, MEEPRTSEEPGSVTNSVTSSER, and VTSDWSDYRPDSDSEQAYKTSSDDPNDSGEL. Polar residues predominate over residues 1446–1456; that stretch reads SVTNSVTSSER.

As to quaternary structure, interacts (via the doublecortin domains) with microtubules. Interacts with RP1L1. Interacts with MAK.

It is found in the cytoplasm. Its subcellular location is the cytoskeleton. The protein localises to the cilium axoneme. It localises to the cell projection. The protein resides in the cilium. It is found in the photoreceptor outer segment. Microtubule-associated protein regulating the stability and length of the microtubule-based axoneme of photoreceptors. Required for the differentiation of photoreceptor cells, it plays a role in the organization of the outer segment of rod and cone photoreceptors ensuring the correct orientation and higher-order stacking of outer segment disks along the photoreceptor axoneme. This is Oxygen-regulated protein 1 (RP1) from Saimiri boliviensis boliviensis (Bolivian squirrel monkey).